The primary structure comprises 558 residues: Glucose-6-phosphate isomerase (558 aa).

The active-site Proton donor is the Glu-362. Residues His-393 and Lys-523 contribute to the active site.

It belongs to the GPI family.

The protein resides in the cytoplasm. The catalysed reaction is alpha-D-glucose 6-phosphate = beta-D-fructose 6-phosphate. It participates in carbohydrate degradation; glycolysis; D-glyceraldehyde 3-phosphate and glycerone phosphate from D-glucose: step 2/4. The chain is Glucose-6-phosphate isomerase (Pgi) from Drosophila yakuba (Fruit fly).